Reading from the N-terminus, the 341-residue chain is HTH-type transcriptional repressor PurR (341 aa).

The HTH lacI-type domain maps to 2-56 (ATIKDVAKRANVSTTTVSHVINKTRFVAEETRNAVWAAIKELHYSPSAVARSLKV). A DNA-binding region (H-T-H motif) is located at residues 4–23 (IKDVAKRANVSTTTVSHVIN). Residues 48–56 (SAVARSLKV) mediate DNA binding. Hypoxanthine-binding residues include Tyr-73, Arg-190, Thr-192, Phe-221, and Asp-275.

Homodimer.

It participates in purine metabolism; purine nucleotide biosynthesis [regulation]. Its function is as follows. Is the main repressor of the genes involved in the de novo synthesis of purine nucleotides, regulating purB, purC, purEK, purF, purHD, purL, purMN and guaBA expression. PurR is allosterically activated to bind its cognate DNA by binding the purine corepressors, hypoxanthine or guanine, thereby effecting transcription repression. In Salmonella typhi, this protein is HTH-type transcriptional repressor PurR.